The chain runs to 186 residues: Ras-related protein rapA (186 aa).

A GTP-binding site is contributed by Gly12 to Ser19. The Effector region signature appears at Tyr34–Tyr42. GTP contacts are provided by residues Asp59–Thr63 and Asn118–Asp121. Cys183 is subject to Cysteine methyl ester. Cys183 carries S-geranylgeranyl cysteine lipidation. Positions Ala184–Leu186 are cleaved as a propeptide — removed in mature form.

It belongs to the small GTPase superfamily. Ras family. In terms of assembly, interacts with ralGDS (only when rapA is in its GTP-bound state). Interacts with the Rap guanine nucleotide exchange factor glfB.

The protein localises to the cell membrane. The catalysed reaction is GTP + H2O = GDP + phosphate + H(+). Its function is as follows. G protein of the Ras family that positively regulates phagocytosis and negatively regulates macropinocytosis. May be involved in the activation of guanylyl cyclase during the response to hyperosmotic conditions. Overexpressing cells generate alterations in cell shape and contractile responses. Involved in chemotaxis via regulation of the balance of Ras and Rap signaling at the leading edge of chemotaxing cells. The chain is Ras-related protein rapA (rapA) from Dictyostelium discoideum (Social amoeba).